A 363-amino-acid polypeptide reads, in one-letter code: Anthranilate phosphoribosyltransferase (363 aa).

5-phospho-alpha-D-ribose 1-diphosphate contacts are provided by residues Gly85, 88 to 89 (GD), Thr93, 95 to 98 (NVST), 113 to 121 (KHGNRALSS), and Ala125. Gly85 is an anthranilate binding site. Residue Ser97 coordinates Mg(2+). Asn116 lines the anthranilate pocket. Arg171 lines the anthranilate pocket. 2 residues coordinate Mg(2+): Asp233 and Glu234.

Belongs to the anthranilate phosphoribosyltransferase family. As to quaternary structure, homodimer. It depends on Mg(2+) as a cofactor.

It carries out the reaction N-(5-phospho-beta-D-ribosyl)anthranilate + diphosphate = 5-phospho-alpha-D-ribose 1-diphosphate + anthranilate. The protein operates within amino-acid biosynthesis; L-tryptophan biosynthesis; L-tryptophan from chorismate: step 2/5. Catalyzes the transfer of the phosphoribosyl group of 5-phosphorylribose-1-pyrophosphate (PRPP) to anthranilate to yield N-(5'-phosphoribosyl)-anthranilate (PRA). The polypeptide is Anthranilate phosphoribosyltransferase (Gluconobacter oxydans (strain 621H) (Gluconobacter suboxydans)).